The sequence spans 445 residues: Ribosomal protein uS12 methylthiotransferase RimO (445 aa).

Residues 10 to 120 (PKVGFVSLGC…VVNAVHEVVP (111 aa)) form the MTTase N-terminal domain. Residues C19, C55, C84, C153, C157, and C160 each coordinate [4Fe-4S] cluster. One can recognise a Radical SAM core domain in the interval 139-378 (LTPRHYAYLK…AHQQEISSAR (240 aa)). The TRAM domain maps to 380–445 (QQRIGKEIEV…DEYDLWAETL (66 aa)).

This sequence belongs to the methylthiotransferase family. RimO subfamily. It depends on [4Fe-4S] cluster as a cofactor.

It is found in the cytoplasm. It carries out the reaction L-aspartate(89)-[ribosomal protein uS12]-hydrogen + (sulfur carrier)-SH + AH2 + 2 S-adenosyl-L-methionine = 3-methylsulfanyl-L-aspartate(89)-[ribosomal protein uS12]-hydrogen + (sulfur carrier)-H + 5'-deoxyadenosine + L-methionine + A + S-adenosyl-L-homocysteine + 2 H(+). Its function is as follows. Catalyzes the methylthiolation of an aspartic acid residue of ribosomal protein uS12. This Pseudomonas fluorescens (strain ATCC BAA-477 / NRRL B-23932 / Pf-5) protein is Ribosomal protein uS12 methylthiotransferase RimO.